The chain runs to 326 residues: UPF0324 membrane protein PBPRB0970 (326 aa).

A run of 10 helical transmembrane segments spans residues F27 to F49, L70 to A89, G94 to L116, G123 to I145, A155 to L177, F184 to G206, I216 to F235, I242 to V261, I271 to I290, and L303 to V325.

It belongs to the UPF0324 family.

The protein localises to the cell membrane. In Photobacterium profundum (strain SS9), this protein is UPF0324 membrane protein PBPRB0970.